Here is a 504-residue protein sequence, read N- to C-terminus: Anaerobic nitric oxide reductase transcription regulator NorR (504 aa).

4-aspartylphosphate is present on Asp-57. In terms of domain architecture, Sigma-54 factor interaction spans 187-416 (MIGLSPGMTQ…LEHAIHRAVV (230 aa)). ATP-binding positions include 215 to 222 (GETGTGKE) and 278 to 287 (ADNGTLFLDE). The segment at residues 479-498 (WAACARMLETDVANLHRLAK) is a DNA-binding region (H-T-H motif).

The protein operates within nitrogen metabolism; nitric oxide reduction. Functionally, required for the expression of anaerobic nitric oxide (NO) reductase, acts as a transcriptional activator for at least the norVW operon. Activation also requires sigma-54. This is Anaerobic nitric oxide reductase transcription regulator NorR from Escherichia coli O17:K52:H18 (strain UMN026 / ExPEC).